Here is a 320-residue protein sequence, read N- to C-terminus: Glyoxylate/hydroxypyruvate reductase B (320 aa).

Residues arginine 233 and glutamate 262 contribute to the active site. Histidine 281 serves as the catalytic Proton donor.

This sequence belongs to the D-isomer specific 2-hydroxyacid dehydrogenase family. GhrB subfamily. Homodimer.

Its subcellular location is the cytoplasm. The enzyme catalyses glycolate + NADP(+) = glyoxylate + NADPH + H(+). It carries out the reaction (R)-glycerate + NAD(+) = 3-hydroxypyruvate + NADH + H(+). The catalysed reaction is (R)-glycerate + NADP(+) = 3-hydroxypyruvate + NADPH + H(+). Functionally, catalyzes the NADPH-dependent reduction of glyoxylate and hydroxypyruvate into glycolate and glycerate, respectively. This Pectobacterium atrosepticum (strain SCRI 1043 / ATCC BAA-672) (Erwinia carotovora subsp. atroseptica) protein is Glyoxylate/hydroxypyruvate reductase B.